The sequence spans 570 residues: GDP-Man:Man(3)GlcNAc(2)-PP-Dol alpha-1,2-mannosyltransferase (570 aa).

At 1–7 (MKLADFV) the chain is on the lumenal side. Residues 8–70 (TYVFGSLLAG…DFGWKNSSVR (63 aa)) form a helical membrane-spanning segment. Residues 71–200 (RAFILASERP…RLVESKSWPK (130 aa)) lie on the Cytoplasmic side of the membrane. Positions 201 to 221 (FTLLGQAYGSIILSIEALTTL) form an intramembrane region, helical. The Cytoplasmic segment spans residues 222 to 446 (APDYWIDTMG…FGINAMWNEH (225 aa)). Positions 447–467 (FGIAVVEYMASGLIPLCHASA) form an intramembrane region, helical. Residues 468–570 (GPLYDIVVPW…LNLTHNRMFS (103 aa)) are Cytoplasmic-facing.

This sequence belongs to the glycosyltransferase group 1 family.

It localises to the endoplasmic reticulum membrane. The catalysed reaction is an alpha-D-Man-(1-&gt;3)-[alpha-D-Man-(1-&gt;6)]-beta-D-Man-(1-&gt;4)-beta-D-GlcNAc-(1-&gt;4)-alpha-D-GlcNAc-diphospho-di-trans,poly-cis-dolichol + 2 GDP-alpha-D-mannose = an alpha-D-Man-(1-&gt;2)-alpha-D-Man-(1-&gt;2)-alpha-D-Man-(1-&gt;3)-[alpha-D-Man-(1-&gt;6)]-beta-D-Man-(1-&gt;4)-beta-D-GlcNAc-(1-&gt;4)-alpha-D-GlcNAc-diphospho-di-trans,poly-cis-dolichol + 2 GDP + 2 H(+). Its pathway is protein modification; protein glycosylation. Functionally, GDP-Man:Man(3)GlcNAc(2)-PP-Dol alpha-1,2-mannosyltransferase that operates in the biosynthetic pathway of dolichol-linked oligosaccharides, the glycan precursors employed in protein asparagine (N)-glycosylation. The assembly of dolichol-linked oligosaccharides begins on the cytosolic side of the endoplasmic reticulum membrane and finishes in its lumen. The sequential addition of sugars to dolichol pyrophosphate produces dolichol-linked oligosaccharides containing fourteen sugars, including two GlcNAcs, nine mannoses and three glucoses. Once assembled, the oligosaccharide is transferred from the lipid to nascent proteins by oligosaccharyltransferases. Catalyzes, on the cytoplasmic face of the endoplasmic reticulum, the addition of the fourth and fifth mannose residues to the dolichol-linked oligosaccharide chain, to produce Man(5)GlcNAc(2)-PP-dolichol core oligosaccharide. This is GDP-Man:Man(3)GlcNAc(2)-PP-Dol alpha-1,2-mannosyltransferase (ALG11) from Kluyveromyces lactis (strain ATCC 8585 / CBS 2359 / DSM 70799 / NBRC 1267 / NRRL Y-1140 / WM37) (Yeast).